The primary structure comprises 191 residues: MSTALPLCSILILAGGRGQRMGGRDKGLVSWHGEPLVAHVQHVVREFSDDVVISCNRNQERYALYADQLVSDAEVDFPGPLAGVITGLKVARHEWVVMLACDAPLIDQALIEGLLRLAVEHDSAAMVRQGGYWQPMFSVLPRRVLPMLEHAWAAGERSLQKALLGAVPVQALECAENDQRLSNFNSPELLL.

GTP contacts are provided by residues 13–15 (LAG), Lys-26, Asp-72, and Asp-102. A Mg(2+)-binding site is contributed by Asp-102.

This sequence belongs to the MobA family. In terms of assembly, monomer. Mg(2+) is required as a cofactor.

Its subcellular location is the cytoplasm. It carries out the reaction Mo-molybdopterin + GTP + H(+) = Mo-molybdopterin guanine dinucleotide + diphosphate. In terms of biological role, transfers a GMP moiety from GTP to Mo-molybdopterin (Mo-MPT) cofactor (Moco or molybdenum cofactor) to form Mo-molybdopterin guanine dinucleotide (Mo-MGD) cofactor. This Pseudomonas entomophila (strain L48) protein is Molybdenum cofactor guanylyltransferase.